A 522-amino-acid polypeptide reads, in one-letter code: Protein DETOXIFICATION 31 (522 aa).

12 helical membrane passes run 89-109 (GAVTQVFAGHISTLALAAVSI), 113-133 (VIAGFSFGIMLGMGSALETLC), 154-174 (VILSVTALFLSLIYIFAAPIL), 183-203 (ISAMAGIFSIYMIPQIFAYAI), 217-237 (IMVMAGISGVVLVIHSFFTWL), 249-269 (LALVLNTSWWVIVVAQLVYIF), 299-319 (AAMLCLEIWYFMALVLFAGYL), 324-344 (VSVAALSICMNILGWAAMVAF), 371-391 (VVAVILSTAIGMFIAAGLLFF), 415-435 (MLAFCIVINNVQPVLSGVAVG), 441-461 (VVAYVNIACYYLFGVPFGLLL), and 471-491 (GIWWGMVTGTFVQSIVLTWMI).

Belongs to the multi antimicrobial extrusion (MATE) (TC 2.A.66.1) family.

Its subcellular location is the membrane. Its function is as follows. Positively mediates root hair elongation. The polypeptide is Protein DETOXIFICATION 31 (Arabidopsis thaliana (Mouse-ear cress)).